The following is a 325-amino-acid chain: Lactonase drp35 (325 aa).

Residues Glu46, Ser108, Gly110, Glu128, Thr131, Tyr133, Asp136, Asn183, Asp234, and Ser235 each contribute to the Ca(2+) site. Asp234 acts as the Proton donor in catalysis.

This sequence belongs to the SMP-30/CGR1 family. Requires Ca(2+) as cofactor.

It is found in the cytoplasm. Exhibits lactonase activity. Acts in cells with perturbed membrane integrity and is possibly related to the membrane homeostasis. The chain is Lactonase drp35 (drp35) from Staphylococcus haemolyticus (strain JCSC1435).